The following is a 343-amino-acid chain: MLNQRIHPGMLVLLMFLYHFMEDHTAQAGNCWLRQARNGRCQVLYKTDLSKEECCKSGRLTTSWTEEDVNDNTLFKWMIFNGGAPNCIPCKETCENVDCGPGKKCKMNKKNKPRCVCAPDCSNITWKGPVCGLDGKTYRNECALLKARCKEQPELEVQYQGKCKKTCRDVLCPGSSTCVVDQTNNAYCVTCNRICPEPTSPEQYLCGNDGITYASACHLRKATCLLGRSIGLAYEGKCIKAKSCEDIQCSAGKKCLWDFKVGRGRCALCDELCPESKSDEAVCASDNTTYPSECAMKEAACSMGVLLEVKHSGSCNSINEDPEEEEEDEDQDYSFPISSILEW.

The N-terminal stretch at 1–28 (MLNQRIHPGMLVLLMFLYHFMEDHTAQA) is a signal peptide. Positions 29-102 (GNCWLRQARN…TCENVDCGPG (74 aa)) constitute a TB domain. Disulfide bonds link Cys31-Cys54, Cys41-Cys87, Cys55-Cys90, Cys94-Cys105, Cys99-Cys115, Cys117-Cys149, Cys121-Cys142, and Cys131-Cys163. The 24-residue stretch at 93-116 (TCENVDCGPGKKCKMNKKNKPRCV) folds into the Follistatin-like 1 domain. Kazal-like domains lie at 99–165 (CGPG…KCKK), 185–240 (NAYC…KCIK), and 263–317 (RGRC…SCNS). A glycan (N-linked (GlcNAc...) asparagine) is linked at Asn123. Residues 166 to 189 (TCRDVLCPGSSTCVVDQTNNAYCV) form the Follistatin-like 2 domain. Cystine bridges form between Cys191-Cys224, Cys195-Cys217, and Cys206-Cys238. Residues 243–267 (SCEDIQCSAGKKCLWDFKVGRGRCA) enclose the Follistatin-like 3 domain. 3 disulfide bridges follow: Cys269–Cys301, Cys273–Cys294, and Cys283–Cys315. Asn287 is a glycosylation site (N-linked (GlcNAc...) asparagine). The tract at residues 315-343 (CNSINEDPEEEEEDEDQDYSFPISSILEW) is disordered. Acidic residues predominate over residues 320 to 332 (EDPEEEEEDEDQD).

As to quaternary structure, monomer. Ciliary ganglion neurons. Levels are higher in the iris than the choroid.

The protein resides in the secreted. Its function is as follows. Binds directly to activin and functions as an activin antagonist. Inhibits activin A signaling in the iris and regulates somatostatin phenotype in ciliary ganglion neurons. Specific inhibitor of the biosynthesis and secretion of pituitary follicle stimulating hormone (FSH). The sequence is that of Follistatin (FST) from Gallus gallus (Chicken).